Consider the following 678-residue polypeptide: Protein hook (678 aa).

Residues 1-155 (MSTQNGMYYS…NIMRALQELE (155 aa)) are interaction with microtubules. One can recognise a Calponin-homology (CH) domain in the interval 5-123 (NGMYYSLLEW…RLLQLVLGCA (119 aa)). Coiled coils occupy residues 135 to 435 (EIMC…LKCG) and 479 to 589 (QTAL…AKEV).

The protein belongs to the hook family. In terms of assembly, homodimer. Interacts with microtubules via its N-terminus.

It is found in the cytoplasm. Its subcellular location is the cytoskeleton. The protein resides in the endosome. It localises to the synapse. Involved in endocytic trafficking by stabilizing organelles of the endocytic pathway. Probably acts as a cytoskeletal linker protein required to tether endosome vesicles to the cytoskeleton. Involved in modulation of endocytosis at stages required for down-regulation of membrane proteins that control synapse size. Not involved in synaptic vesicle recycling. Required in R7 cells for boss endocytosis into multivesicular bodies (MVBs). Has a role in regulating adult longevity. In Drosophila virilis (Fruit fly), this protein is Protein hook.